We begin with the raw amino-acid sequence, 103 residues long: Small ribosomal subunit protein uS10 (103 aa).

Belongs to the universal ribosomal protein uS10 family. As to quaternary structure, part of the 30S ribosomal subunit.

Functionally, involved in the binding of tRNA to the ribosomes. This is Small ribosomal subunit protein uS10 from Psychromonas ingrahamii (strain DSM 17664 / CCUG 51855 / 37).